Reading from the N-terminus, the 247-residue chain is Probable transcriptional regulatory protein ABO_0750 (247 aa).

It belongs to the TACO1 family.

Its subcellular location is the cytoplasm. The chain is Probable transcriptional regulatory protein ABO_0750 from Alcanivorax borkumensis (strain ATCC 700651 / DSM 11573 / NCIMB 13689 / SK2).